The following is a 131-amino-acid chain: Glycine cleavage system H protein (131 aa).

A Lipoyl-binding domain is found at 24–106 (TVRVGITDYA…YGEGWLVELQ (83 aa)). At K65 the chain carries N6-lipoyllysine.

It belongs to the GcvH family. As to quaternary structure, the glycine cleavage system is composed of four proteins: P, T, L and H. Requires (R)-lipoate as cofactor.

Its function is as follows. The glycine cleavage system catalyzes the degradation of glycine. The H protein shuttles the methylamine group of glycine from the P protein to the T protein. In Mycolicibacterium vanbaalenii (strain DSM 7251 / JCM 13017 / BCRC 16820 / KCTC 9966 / NRRL B-24157 / PYR-1) (Mycobacterium vanbaalenii), this protein is Glycine cleavage system H protein.